Here is a 580-residue protein sequence, read N- to C-terminus: Formate--tetrahydrofolate ligase (580 aa).

T83–T90 contacts ATP.

This sequence belongs to the formate--tetrahydrofolate ligase family.

The catalysed reaction is (6S)-5,6,7,8-tetrahydrofolate + formate + ATP = (6R)-10-formyltetrahydrofolate + ADP + phosphate. It participates in one-carbon metabolism; tetrahydrofolate interconversion. The polypeptide is Formate--tetrahydrofolate ligase (Haloquadratum walsbyi (strain DSM 16790 / HBSQ001)).